Reading from the N-terminus, the 614-residue chain is Vitamin B12 transporter BtuB (614 aa).

Positions 1-20 (MIKKASLLTACSVTAFSAWA) are cleaved as a signal peptide. Over 21–157 (QDTSPDTLVV…NIITTRDEPG (137 aa)) the chain is Periplasmic. Positions 26–33 (DTLVVTAN) match the TonB box motif. The 115-residue stretch at 38 to 152 (PRSTVLAPTT…IGGVVNIITT (115 aa)) folds into the TBDR plug domain. Residues Leu83, Ser85, Asn92, and 110-111 (VS) each bind cyanocob(III)alamin. Positions 155–614 (EPGTEISAGW…EYTLSGSYTF (460 aa)) constitute a TBDR beta-barrel domain. The beta stranded transmembrane segment at 158 to 165 (TEISAGWG) threads the bilayer. Residues 166-168 (SNS) lie on the Extracellular side of the membrane. Residues 169–178 (YQNYDVSTQQ) traverse the membrane as a beta stranded segment. Topologically, residues 179 to 183 (QLGDK) are periplasmic. The beta stranded transmembrane segment at 184–195 (TRVTLLGDYAHT) threads the bilayer. At 196–216 (HGYDVVAYGNTGTQAQTDNDG) the chain is on the extracellular side. The Ca(2+) site is built by Asp199, Gln211, Asp213, and Asp215. A beta stranded membrane pass occupies residues 217 to 227 (FLSKTLYGALE). The Periplasmic segment spans residues 228–231 (HNFT). The chain crosses the membrane as a beta stranded span at residues 232–248 (DAWSGFVRGYGYDNRTN). Ca(2+) contacts are provided by Tyr249 and Asp250. Residues 249–262 (YDAYYSPGSPLLDT) lie on the Extracellular side of the membrane. Cyanocob(III)alamin is bound at residue Ala251. Asp261 is a Ca(2+) binding site. A beta stranded membrane pass occupies residues 263 to 277 (RKLYSQSWDAGLRYN). Gly278 is a topological domain (periplasmic). A beta stranded membrane pass occupies residues 279–296 (ELIKSQLITSYSHSKDYN). At 297–308 (YDPHYGRYDSSA) the chain is on the extracellular side. Thr309 contacts cyanocob(III)alamin. A beta stranded transmembrane segment spans residues 309-325 (TLDEMKQYTVQWANNVI). Topologically, residues 326 to 327 (VG) are periplasmic. The chain crosses the membrane as a beta stranded span at residues 328 to 337 (HGSIGAGVDW). Residues 338 to 352 (QKQTTTPGTGYVEDG) lie on the Extracellular side of the membrane. Residues 353–369 (YDQRNTGIYLTGLQQVG) form a beta stranded membrane-spanning segment. A topological domain (periplasmic) is located at residue Asp370. A beta stranded transmembrane segment spans residues 371-381 (FTFEGAARSDD). At 382 to 384 (NSQ) the chain is on the extracellular side. A beta stranded transmembrane segment spans residues 385–400 (FGRHGTWQTSAGWEFI). The Periplasmic segment spans residues 401–402 (EG). The beta stranded transmembrane segment at 403-417 (YRFIASYGTSYKAPN) threads the bilayer. Topologically, residues 418-433 (LGQLYGFYGNPNLDPE) are extracellular. The beta stranded transmembrane segment at 434–443 (KSKQWEGAFE) threads the bilayer. Topologically, residues 444-448 (GLTAG) are periplasmic. A beta stranded membrane pass occupies residues 449 to 458 (VNWRISGYRN). The Extracellular portion of the chain corresponds to 459–472 (DVSDLIDYDDHTLK). The beta stranded transmembrane segment at 473–490 (YYNEGKARIKGVEATANF) threads the bilayer. The Periplasmic segment spans residues 491–493 (DTG). Residues 494–509 (PLTHTVSYDYVDARNA) form a beta stranded membrane-spanning segment. Residues 510 to 516 (ITDTPLL) lie on the Extracellular side of the membrane. Cyanocob(III)alamin is bound at residue Arg517. Residues 517–529 (RRAKQQVKYQLDW) traverse the membrane as a beta stranded segment. At 530–534 (QLYDF) the chain is on the periplasmic side. Residues 535–550 (DWGITYQYLGTRYDKD) form a beta stranded membrane-spanning segment. Tyr551 contacts cyanocob(III)alamin. At 551–557 (YSSYPYQ) the chain is on the extracellular side. Residues 558–572 (TVKMGGVSLWDLAVA) traverse the membrane as a beta stranded segment. The Periplasmic portion of the chain corresponds to 573-584 (YPVTSHLTVRGK). A beta stranded membrane pass occupies residues 585–596 (IANLFDKDYETV). The Extracellular segment spans residues 597-601 (YGYQT). The TonB C-terminal box motif lies at 597–614 (YGYQTAGREYTLSGSYTF). A beta stranded membrane pass occupies residues 602-614 (AGREYTLSGSYTF).

The protein belongs to the TonB-dependent receptor family. BtuB (TC 1.B.14.3.1) subfamily. In terms of assembly, interacts with TonB. (Microbial infection) The hairpin motif of the receptor-binding domain of colicin E3 (ColE3) interacts with BtuB without displacing BtuB's central plug. An N-terminal fragment of E3 binds OmpF; trimeric complexes with ColE3, BtuB and OmpF can be cross-linked and immunoprecipitated.

It localises to the cell outer membrane. Its activity is regulated as follows. Calcium increases vitamin B12 binding affinity by a factor of 50-100. With respect to regulation, (Microbial infection) Colicins E1, E3 and K inhibit cyanocobalamin (CN-B12) uptake; E1 and E3 inhibit binding of CN-B12 to cells while colicin K inhibits a later, energy-dependent step of CN-B12. In terms of biological role, involved in the active translocation of vitamin B12 (cyanocobalamin) across the outer membrane to the periplasmic space. It derives its energy for transport by interacting with the trans-periplasmic membrane protein TonB. Its function is as follows. (Microbial infection) Acts as a receptor for bacteriophages BF23 and C1, and for A and E colicins. Cyanocobalamin (CN-B12) in solid medium protects against colicins E1 and E3. Does not act as the translocon for colicin E3 (ColE3). The translocon is OmpF; trimeric complexes with ColE3, BtuB and OmpF can be cross-linked and immunoprecipitated. The polypeptide is Vitamin B12 transporter BtuB (Escherichia coli (strain K12)).